The chain runs to 366 residues: DNA integrity scanning protein DisA (366 aa).

In terms of domain architecture, DAC spans 21–159 (VHTLKGTLQR…EGKAHMLEQP (139 aa)). Residues glycine 88, leucine 106, and 119–123 (TRHRS) contribute to the ATP site.

The protein belongs to the DisA family. In terms of assembly, homooctamer. Mg(2+) is required as a cofactor.

It catalyses the reaction 2 ATP = 3',3'-c-di-AMP + 2 diphosphate. Participates in a DNA-damage check-point. DisA forms globular foci that rapidly scan along the chromosomes searching for lesions. In terms of biological role, also has diadenylate cyclase activity, catalyzing the condensation of 2 ATP molecules into cyclic di-AMP (c-di-AMP). c-di-AMP likely acts as a signaling molecule that may couple DNA integrity with a cellular process. This Corynebacterium glutamicum (strain R) protein is DNA integrity scanning protein DisA.